Consider the following 214-residue polypeptide: GTP-binding nuclear protein GSP1/Ran (214 aa).

Residues 4–168 form the Small GTPase Ran-type domain; sequence EVAAFKLVLV…LWLARKLAGN (165 aa). 15–22 provides a ligand contact to GTP; sequence DGGTGKTT. A switch-I region spans residues 34-42; it reads NRYNATLGV. GTP contacts are provided by residues glycine 65, 119–122, and 147–149; these read NKVD and SAK. The tract at residues 65-81 is switch-II; that stretch reads GQEKFGGLRDGYYINGQ.

Belongs to the small GTPase superfamily. Ran family. Found in a nuclear export complex with RanGTP, exportin and pre-miRNA.

The protein resides in the nucleus. Its function is as follows. GTP-binding protein involved in nucleocytoplasmic transport. Required for the import of protein into the nucleus and also for RNA export. Involved in chromatin condensation and control of cell cycle. The polypeptide is GTP-binding nuclear protein GSP1/Ran (GSP1) (Yarrowia lipolytica (strain CLIB 122 / E 150) (Yeast)).